The chain runs to 421 residues: UDP-N-acetylglucosamine 1-carboxyvinyltransferase (421 aa).

Residue 22-23 (KN) participates in phosphoenolpyruvate binding. Arg-94 contributes to the UDP-N-acetyl-alpha-D-glucosamine binding site. The active-site Proton donor is Cys-118. Cys-118 is modified (2-(S-cysteinyl)pyruvic acid O-phosphothioketal). UDP-N-acetyl-alpha-D-glucosamine-binding positions include 123–127 (RPMDL), Asp-308, and Ile-330.

This sequence belongs to the EPSP synthase family. MurA subfamily.

It is found in the cytoplasm. The enzyme catalyses phosphoenolpyruvate + UDP-N-acetyl-alpha-D-glucosamine = UDP-N-acetyl-3-O-(1-carboxyvinyl)-alpha-D-glucosamine + phosphate. It functions in the pathway cell wall biogenesis; peptidoglycan biosynthesis. Functionally, cell wall formation. Adds enolpyruvyl to UDP-N-acetylglucosamine. This chain is UDP-N-acetylglucosamine 1-carboxyvinyltransferase, found in Ruegeria pomeroyi (strain ATCC 700808 / DSM 15171 / DSS-3) (Silicibacter pomeroyi).